A 267-amino-acid polypeptide reads, in one-letter code: MRVAALISGGKDSCYNMMQCVAAGHQIVALANLRPAENQVGSDELDSYMYQTVGHHAIDLYAEAMALPLYRRTIRGKSVDTGPVYTKCEGDEVEDLYELLKLVKEKEEVEGISVGAILSDYQRVRVENVCKRLNLQPLAYLWQRNQEDLLQEMISSNIQAIIIKVAALGLDPDKHLGKPLDQMEPYLLELSKKYGVHVCGEGGEYETFTLDCPLFKKKIIVDSSEVVTHSADAFAPVAYLRFLELHLEDKVSPVPDNCRTSNDIHNS.

Residue Tyr97 is modified to Phosphotyrosine.

The protein belongs to the Diphthine--ammonia ligase family.

The enzyme catalyses diphthine-[translation elongation factor 2] + NH4(+) + ATP = diphthamide-[translation elongation factor 2] + AMP + diphosphate + H(+). Its pathway is protein modification; peptidyl-diphthamide biosynthesis. Its function is as follows. Amidase that catalyzes the last step of diphthamide biosynthesis using ammonium and ATP. Diphthamide biosynthesis consists in the conversion of an L-histidine residue in the translation elongation factor eEF-2 (EEF2) to diphthamide. In Bos taurus (Bovine), this protein is Diphthine--ammonia ligase (DPH6).